The following is a 223-amino-acid chain: GRF1-interacting factor 3 (223 aa).

Residues 179-223 (ANNAGPNDASGGGKPDGTNMSQSGADGQGGSAARHGGGDAKTEGK) form a disordered region. Residues 214 to 223 (GGGDAKTEGK) are compositionally biased toward basic and acidic residues.

This sequence belongs to the SS18 family. Interacts with GRF1. In terms of tissue distribution, predominantly expressed in shoot tips containing the shoot apical meristem (SAM) and flower buds. Also expressed in mature flowers.

Functionally, transcription coactivator that plays a role in the regulation of cell expansion in leaf and cotyledons tissues. Component of a network formed by miR396, the GRFs and their interacting factors (GIFs) acting in the regulation of meristem function, at least partially through the control of cell proliferation. GIFs are involved in the positive regulation of cell proliferation of lateral organs in a functionally redundant manner. This chain is GRF1-interacting factor 3 (GIF3), found in Arabidopsis thaliana (Mouse-ear cress).